Consider the following 560-residue polypeptide: Formate--tetrahydrofolate ligase (560 aa).

69–76 (TPAGEGKS) contributes to the ATP binding site.

It belongs to the formate--tetrahydrofolate ligase family.

It catalyses the reaction (6S)-5,6,7,8-tetrahydrofolate + formate + ATP = (6R)-10-formyltetrahydrofolate + ADP + phosphate. It functions in the pathway one-carbon metabolism; tetrahydrofolate interconversion. The polypeptide is Formate--tetrahydrofolate ligase (Bacillus pumilus (strain SAFR-032)).